The chain runs to 284 residues: Acetylglutamate kinase (284 aa).

Residues 66-67 (GG), Arg88, and Asn179 each bind substrate.

It belongs to the acetylglutamate kinase family. ArgB subfamily.

It is found in the cytoplasm. The catalysed reaction is N-acetyl-L-glutamate + ATP = N-acetyl-L-glutamyl 5-phosphate + ADP. It functions in the pathway amino-acid biosynthesis; L-arginine biosynthesis; N(2)-acetyl-L-ornithine from L-glutamate: step 2/4. Catalyzes the ATP-dependent phosphorylation of N-acetyl-L-glutamate. The chain is Acetylglutamate kinase from Actinobacillus pleuropneumoniae serotype 3 (strain JL03).